The primary structure comprises 207 residues: BTB/POZ domain-containing protein At1g01640 (207 aa).

Residues 24 to 94 (TDVLVKPGEE…LYSGNLKAPY (71 aa)) enclose the BTB domain.

Interacts with CUL3A.

It participates in protein modification; protein ubiquitination. May act as a substrate-specific adapter of an E3 ubiquitin-protein ligase complex (CUL3-RBX1-BTB) which mediates the ubiquitination and subsequent proteasomal degradation of target proteins. This is BTB/POZ domain-containing protein At1g01640 from Arabidopsis thaliana (Mouse-ear cress).